The primary structure comprises 226 residues: Leucyl/phenylalanyl-tRNA--protein transferase (226 aa).

The protein belongs to the L/F-transferase family.

Its subcellular location is the cytoplasm. The catalysed reaction is N-terminal L-lysyl-[protein] + L-leucyl-tRNA(Leu) = N-terminal L-leucyl-L-lysyl-[protein] + tRNA(Leu) + H(+). It carries out the reaction N-terminal L-arginyl-[protein] + L-leucyl-tRNA(Leu) = N-terminal L-leucyl-L-arginyl-[protein] + tRNA(Leu) + H(+). The enzyme catalyses L-phenylalanyl-tRNA(Phe) + an N-terminal L-alpha-aminoacyl-[protein] = an N-terminal L-phenylalanyl-L-alpha-aminoacyl-[protein] + tRNA(Phe). In terms of biological role, functions in the N-end rule pathway of protein degradation where it conjugates Leu, Phe and, less efficiently, Met from aminoacyl-tRNAs to the N-termini of proteins containing an N-terminal arginine or lysine. This Pseudomonas entomophila (strain L48) protein is Leucyl/phenylalanyl-tRNA--protein transferase.